A 637-amino-acid polypeptide reads, in one-letter code: Threonine--tRNA ligase (637 aa).

A TGS domain is found at 1–61 (MLNITLPDCS…VEDSAVQIIT (61 aa)). The catalytic stretch occupies residues 242-533 (DHRKLGKQLD…LIENHAGSFP (292 aa)). 3 residues coordinate Zn(2+): cysteine 333, histidine 384, and histidine 510.

This sequence belongs to the class-II aminoacyl-tRNA synthetase family. As to quaternary structure, homodimer. It depends on Zn(2+) as a cofactor.

Its subcellular location is the cytoplasm. It catalyses the reaction tRNA(Thr) + L-threonine + ATP = L-threonyl-tRNA(Thr) + AMP + diphosphate + H(+). In terms of biological role, catalyzes the attachment of threonine to tRNA(Thr) in a two-step reaction: L-threonine is first activated by ATP to form Thr-AMP and then transferred to the acceptor end of tRNA(Thr). Also edits incorrectly charged L-seryl-tRNA(Thr). In Neisseria gonorrhoeae (strain ATCC 700825 / FA 1090), this protein is Threonine--tRNA ligase.